The sequence spans 224 residues: DNA mismatch repair protein MutH (224 aa).

It belongs to the MutH family.

Its subcellular location is the cytoplasm. Its function is as follows. Sequence-specific endonuclease that cleaves unmethylated GATC sequences. It is involved in DNA mismatch repair. The chain is DNA mismatch repair protein MutH from Shewanella amazonensis (strain ATCC BAA-1098 / SB2B).